The following is a 582-amino-acid chain: BTB/POZ domain and ankyrin repeat-containing protein NPR1 (582 aa).

Polar residues predominate over residues Met-1–Phe-12. The segment at Met-1–Ala-27 is disordered. Positions Ala-55 to Val-140 constitute a BTB domain. Residues Ala-147–His-161 form a C2HC NPR-type zinc finger. Positions 150, 155, 157, and 160 each coordinate Zn(2+). ANK repeat units follow at residues Arg-229 to Leu-258, Lys-269 to Asp-299, Phe-301 to His-328, and Arg-332 to Asp-361. The tract at residues Pro-391–Thr-526 is salicylic acid-binding core (SBC). Arg-436 contacts salicylate. Disordered stretches follow at residues Glu-525–His-544 and Gln-551–Arg-582. Residues Ala-553–Arg-563 are compositionally biased toward basic and acidic residues. A compositionally biased stretch (low complexity) spans Ser-564–Ser-574.

Belongs to the plant 'ANKYRIN-BTB/POZ' family. 'NPR1-like' subfamily. As to quaternary structure, oligomer in an uninduced state; disulfide-linked. Forms activated monomer upon changes in cellular redox potential. Interacts with TGA2.2. Interacts with NRR.

The protein localises to the cytoplasm. Its subcellular location is the nucleus. The protein resides in the nuclear body. Its pathway is protein modification; protein ubiquitination. In terms of biological role, salicylic acid (SA)-binding substrate-specific adapter of an E3 ubiquitin-protein ligase complex (CUL3-RBX1-BTB) which mediates the ubiquitination and subsequent proteasomal degradation of target proteins. Transcription cofactor that represses gene expression in the absence of salicylic acid (SA), when attached to negative cis-elements (W-box) with WRKY transcription factors, but stimulates gene expression upon activation by SA, when sumoylated and attached to positive cis-elements (as-1) with TGA transcription factors, thus confering immunity through a series of gene regulations ending in a significant increase in antimicrobial and defense genes expression. Key positive factor of disease resistance. Involved in defense response against the bacterial blight disease caused by Xanthomonas oryzae pv. oryzae (Xoo). Plants over-expressing NPR1/NH1 acquire high levels of resistance to Xoo, express constitutively defense genes and develop lesion-mimic spots on leaves at pre-flowering stage. Involved in basal resistance to the blast pathogen Magnaporthe oryzae. Plants over-expressing NPR1/NH1 have increased resistance to M.oryzae infection. Plays an essential role in benzothiadiazole (BTH)-induced resistance to the blast fungus disease caused by Magnaporthe oryzae. Functions as a transcriptional coactivator of TGA2.1 and LG2 in vitro. Involved in defense response against herbivore. Plants silencing NPR1/NH1 have increased herbivore-induced trypsin proteinase inhibitors and volatiles, which reduces the performance of the striped stem borer (SSB) Chilo suppressalis. The polypeptide is BTB/POZ domain and ankyrin repeat-containing protein NPR1 (Oryza sativa subsp. indica (Rice)).